The following is a 149-amino-acid chain: Transcriptional regulator MraZ (149 aa).

SpoVT-AbrB domains lie at 5–52 and 81–124; these read ITTL…PLPE and AEEC…DSMV.

It belongs to the MraZ family. As to quaternary structure, forms oligomers.

Its subcellular location is the cytoplasm. The protein localises to the nucleoid. The protein is Transcriptional regulator MraZ of Nitrosococcus oceani (strain ATCC 19707 / BCRC 17464 / JCM 30415 / NCIMB 11848 / C-107).